Here is a 647-residue protein sequence, read N- to C-terminus: Paraneoplastic antigen Ma6E (647 aa).

4 disordered regions span residues Q111–A199, G227–G254, A508–G580, and R608–K647. 3 stretches are compositionally biased toward gly residues: residues G122–G149, G158–A199, and G227–R251. Positions P517 to G570 are enriched in low complexity. The segment covering E625–G636 has biased composition (acidic residues).

The chain is Paraneoplastic antigen Ma6E from Homo sapiens (Human).